The chain runs to 169 residues: Peptide methionine sulfoxide reductase MsrA (169 aa).

C11 is an active-site residue.

Belongs to the MsrA Met sulfoxide reductase family.

It catalyses the reaction L-methionyl-[protein] + [thioredoxin]-disulfide + H2O = L-methionyl-(S)-S-oxide-[protein] + [thioredoxin]-dithiol. The enzyme catalyses [thioredoxin]-disulfide + L-methionine + H2O = L-methionine (S)-S-oxide + [thioredoxin]-dithiol. Has an important function as a repair enzyme for proteins that have been inactivated by oxidation. Catalyzes the reversible oxidation-reduction of methionine sulfoxide in proteins to methionine. This is Peptide methionine sulfoxide reductase MsrA from Leifsonia xyli subsp. xyli (strain CTCB07).